The chain runs to 513 residues: GMP synthase [glutamine-hydrolyzing] (513 aa).

The Glutamine amidotransferase type-1 domain maps to 7-198; the sequence is LIVVVDFGGQ…LFNIAGCRGD (192 aa). The active-site Nucleophile is Cys-84. Residues His-172 and Glu-174 contribute to the active site. In terms of domain architecture, GMPS ATP-PPase spans 199–388; it reads WTTESFITRQ…LGVPEEIVGR (190 aa). 226 to 232 lines the ATP pocket; that stretch reads SGGVDSS.

In terms of assembly, homodimer.

It carries out the reaction XMP + L-glutamine + ATP + H2O = GMP + L-glutamate + AMP + diphosphate + 2 H(+). It participates in purine metabolism; GMP biosynthesis; GMP from XMP (L-Gln route): step 1/1. In terms of biological role, catalyzes the synthesis of GMP from XMP. The sequence is that of GMP synthase [glutamine-hydrolyzing] from Symbiobacterium thermophilum (strain DSM 24528 / JCM 14929 / IAM 14863 / T).